Here is a 302-residue protein sequence, read N- to C-terminus: Stanniocalcin-2 (302 aa).

The N-terminal stretch at 1–24 (MCAERLGQFMTLALVLATFDPARG) is a signal peptide. The segment at 23 to 44 (RGTDATNPPEGPQDRSPQQKGR) is disordered. 2 N-linked (GlcNAc...) asparagine glycosylation sites follow: asparagine 73 and asparagine 74. The tract at residues 217-302 (RPPTAPPERQ…EQSEYSDIRR (86 aa)) is disordered. Residues 227–264 (PQVDRTKLSRAHHGEAGHHLPEPSSRETGRGAKGERGS) show a composition bias toward basic and acidic residues. 2 positions are modified to phosphoserine: serine 250 and serine 251. Phosphothreonine is present on threonine 254.

The protein belongs to the stanniocalcin family. Homodimer; disulfide-linked.

It localises to the secreted. Has an anti-hypocalcemic action on calcium and phosphate homeostasis. The polypeptide is Stanniocalcin-2 (STC2) (Pongo abelii (Sumatran orangutan)).